A 403-amino-acid polypeptide reads, in one-letter code: GDSL esterase/lipase At1g28590 (403 aa).

Positions 1–27 are cleaved as a signal peptide; the sequence is MASLDSLPAMKLVRFILSTLLVTSVNS. S43 (nucleophile) is an active-site residue. 2 N-linked (GlcNAc...) asparagine glycosylation sites follow: N139 and N323. Catalysis depends on residues D346 and H349.

It belongs to the 'GDSL' lipolytic enzyme family.

The protein localises to the secreted. The sequence is that of GDSL esterase/lipase At1g28590 from Arabidopsis thaliana (Mouse-ear cress).